Consider the following 190-residue polypeptide: Glycerol-3-phosphate acyltransferase 2 (190 aa).

5 helical membrane passes run 1 to 21 (MNIL…ALIV), 53 to 73 (VIVA…PLIL), 76 to 96 (TINP…SVFA), 110 to 130 (VFLF…VLTL), and 152 to 172 (LIFE…SIII).

The protein belongs to the PlsY family. As to quaternary structure, probably interacts with PlsX.

It is found in the cell membrane. The catalysed reaction is an acyl phosphate + sn-glycerol 3-phosphate = a 1-acyl-sn-glycero-3-phosphate + phosphate. It participates in lipid metabolism; phospholipid metabolism. Its function is as follows. Catalyzes the transfer of an acyl group from acyl-phosphate (acyl-PO(4)) to glycerol-3-phosphate (G3P) to form lysophosphatidic acid (LPA). This enzyme utilizes acyl-phosphate as fatty acyl donor, but not acyl-CoA or acyl-ACP. This is Glycerol-3-phosphate acyltransferase 2 from Bacillus anthracis.